The primary structure comprises 376 residues: NIF3-like protein 1 (376 aa).

The residue at position 108 (lysine 108) is an N6-acetyllysine. Residues 243–376 are mediates interaction with COPS2; the sequence is LLLHTGMGRL…ETDRDPLRVV (134 aa). Phosphothreonine is present on threonine 254. Position 258 is a phosphoserine (serine 258).

The protein belongs to the GTP cyclohydrolase I type 2/NIF3 family. Homodimer. Interacts with COPS2. Interacts with THOC7. As to expression, ubiquitous. Detected in all tissues tested with higher expression in cerebellum, heart and kidney and to a lower level in cerebrum, lung, liver, spleen and muscle.

The protein resides in the cytoplasm. It localises to the nucleus. Its function is as follows. May function as a transcriptional corepressor through its interaction with COPS2, negatively regulating the expression of genes involved in neuronal differentiation. This is NIF3-like protein 1 from Mus musculus (Mouse).